Here is a 74-residue protein sequence, read N- to C-terminus: MVSKSLIVLLLVSVLVSTFFTTEAYPASYDDDFDALDDLDDLDLDDLLDLEPADLVLLDMWANMLDSQDFEDFE.

An N-terminal signal peptide occupies residues 1-24; the sequence is MVSKSLIVLLLVSVLVSTFFTTEA.

The protein belongs to the non-disulfide-bridged peptide (NDBP) superfamily. Long chain multifunctional peptide (group 2) family. Expressed by the venom gland.

The protein resides in the secreted. May be an antimicrobial peptide. The polypeptide is Anionic peptide clone 8 (Tityus costatus (Brazilian scorpion)).